A 678-amino-acid polypeptide reads, in one-letter code: UvrABC system protein B (678 aa).

Positions 31–417 (ENLNDGLAHQ…KSGTEIIDQV (387 aa)) constitute a Helicase ATP-binding domain. Residue 44 to 51 (GVTGSGKT) coordinates ATP. Residues 97 to 120 (YYDYYQPEAYVPSSDTFIEKDASI) carry the Beta-hairpin motif. Residues 436-602 (QVDDLLSEAR…GLNKKVGELL (167 aa)) enclose the Helicase C-terminal domain. Residues 603–625 (DIGQGGSNKSRNKPRSQKAAEPA) are disordered. The UVR domain maps to 638–673 (QQQIKKLEQQMYKFAQDLEFEKAAAIRDQLHKLREQ).

It belongs to the UvrB family. Forms a heterotetramer with UvrA during the search for lesions. Interacts with UvrC in an incision complex.

Its subcellular location is the cytoplasm. Its function is as follows. The UvrABC repair system catalyzes the recognition and processing of DNA lesions. A damage recognition complex composed of 2 UvrA and 2 UvrB subunits scans DNA for abnormalities. Upon binding of the UvrA(2)B(2) complex to a putative damaged site, the DNA wraps around one UvrB monomer. DNA wrap is dependent on ATP binding by UvrB and probably causes local melting of the DNA helix, facilitating insertion of UvrB beta-hairpin between the DNA strands. Then UvrB probes one DNA strand for the presence of a lesion. If a lesion is found the UvrA subunits dissociate and the UvrB-DNA preincision complex is formed. This complex is subsequently bound by UvrC and the second UvrB is released. If no lesion is found, the DNA wraps around the other UvrB subunit that will check the other stand for damage. The chain is UvrABC system protein B from Mannheimia succiniciproducens (strain KCTC 0769BP / MBEL55E).